We begin with the raw amino-acid sequence, 163 residues long: Cyanate hydratase (163 aa).

Catalysis depends on residues Arg103, Glu106, and Ser129.

The protein belongs to the cyanase family.

The catalysed reaction is cyanate + hydrogencarbonate + 3 H(+) = NH4(+) + 2 CO2. Functionally, catalyzes the reaction of cyanate with bicarbonate to produce ammonia and carbon dioxide. In Ajellomyces dermatitidis (strain ER-3 / ATCC MYA-2586) (Blastomyces dermatitidis), this protein is Cyanate hydratase.